The sequence spans 23 residues: Caerin-4.1 (23 aa).

Expressed by the skin parotoid and/or rostral glands.

The protein resides in the secreted. Functionally, antibacterial peptide, that adopts an alpha helical conformation which can disrupt bacterial membranes. Each caerin displays a different antimicrobial specificity. The protein is Caerin-4.1 of Ranoidea caerulea (Green tree frog).